Here is a 222-residue protein sequence, read N- to C-terminus: N-(5'-phosphoribosyl)anthranilate isomerase (222 aa).

The protein belongs to the TrpF family.

It catalyses the reaction N-(5-phospho-beta-D-ribosyl)anthranilate = 1-(2-carboxyphenylamino)-1-deoxy-D-ribulose 5-phosphate. The protein operates within amino-acid biosynthesis; L-tryptophan biosynthesis; L-tryptophan from chorismate: step 3/5. The protein is N-(5'-phosphoribosyl)anthranilate isomerase of Beijerinckia indica subsp. indica (strain ATCC 9039 / DSM 1715 / NCIMB 8712).